The primary structure comprises 100 residues: Putative pterin-4-alpha-carbinolamine dehydratase 2 (100 aa).

This sequence belongs to the pterin-4-alpha-carbinolamine dehydratase family.

The enzyme catalyses (4aS,6R)-4a-hydroxy-L-erythro-5,6,7,8-tetrahydrobiopterin = (6R)-L-erythro-6,7-dihydrobiopterin + H2O. The polypeptide is Putative pterin-4-alpha-carbinolamine dehydratase 2 (Cupriavidus pinatubonensis (strain JMP 134 / LMG 1197) (Cupriavidus necator (strain JMP 134))).